The sequence spans 140 residues: 3-hydroxyacyl-[acyl-carrier-protein] dehydratase FabZ (140 aa).

Residue His-47 is part of the active site.

The protein belongs to the thioester dehydratase family. FabZ subfamily.

It localises to the cytoplasm. The catalysed reaction is a (3R)-hydroxyacyl-[ACP] = a (2E)-enoyl-[ACP] + H2O. Functionally, involved in unsaturated fatty acids biosynthesis. Catalyzes the dehydration of short chain beta-hydroxyacyl-ACPs and long chain saturated and unsaturated beta-hydroxyacyl-ACPs. In Streptococcus uberis (strain ATCC BAA-854 / 0140J), this protein is 3-hydroxyacyl-[acyl-carrier-protein] dehydratase FabZ.